A 337-amino-acid polypeptide reads, in one-letter code: Phenylalanine--tRNA ligase alpha subunit (337 aa).

Glu252 lines the Mg(2+) pocket.

Belongs to the class-II aminoacyl-tRNA synthetase family. Phe-tRNA synthetase alpha subunit type 1 subfamily. Tetramer of two alpha and two beta subunits. Requires Mg(2+) as cofactor.

The protein localises to the cytoplasm. It carries out the reaction tRNA(Phe) + L-phenylalanine + ATP = L-phenylalanyl-tRNA(Phe) + AMP + diphosphate + H(+). The sequence is that of Phenylalanine--tRNA ligase alpha subunit from Francisella tularensis subsp. novicida (strain U112).